The chain runs to 419 residues: Ribosome biogenesis protein WDR12 homolog (419 aa).

The ubiquitin-like (UBL) domain stretch occupies residues 10-91; it reads VQVHLKTKQE…EDAIEIEYVE (82 aa). WD repeat units follow at residues 103-141, 142-184, 191-230, 249-287, 289-328, 334-374, and 378-416; these read LHDDWVSAVKASGKWILTGCYDNTLNIWTNKGKHILTIP, GHTA…NTVE, GHERGVDSVSVSPDGQRFATGSWDTMLKVWSAELEDAGEG, GHRESISAVQWMDASTLLTGSWDHTLKVWDLSLEGIKAE, STNKSIFDASYSKLNHLILTASADKNLRLYDSRTNQGSVV, GHNA…APLY, and GHGEKVLDIDWSNPKYIVSGGSDNTVRVFKSRKALVENM.

The protein belongs to the WD repeat WDR12/YTM1 family.

The protein localises to the nucleus. It localises to the nucleolus. Its subcellular location is the nucleoplasm. Required for maturation of ribosomal RNAs and formation of the large ribosomal subunit. The chain is Ribosome biogenesis protein WDR12 homolog from Drosophila pseudoobscura pseudoobscura (Fruit fly).